Reading from the N-terminus, the 175-residue chain is uncharacterized protein (175 aa).

Residues 1-17 (MKVEGGESMHESEEGRD) are compositionally biased toward basic and acidic residues. The tract at residues 1–21 (MKVEGGESMHESEEGRDVPNG) is disordered.

This is an uncharacterized protein from Bacillus thuringiensis subsp. kurstaki.